Consider the following 278-residue polypeptide: MLPLLRCVPRSLGAASGLRTAIPAQPLRHLLQPAPRPCLRPFGLLSVRAGSARRSGLLQPPVPCACGCGALHTEGDKAFVEFLTDEIKEEKKIQKHKSLPKMSGDWELEVNGTEAKLLRKVAGEKITVTFNINNSIPPTFDGEEEPSQGQKAEEQEPERTSTPNFVVEVTKTDGKKTLVLDCHYPEDEIGHEDEAESDIFSIKEVSFQATGDSEWRDTNYTLNTDSLDWALYDHLMDFLADRGVDNTFADELVELSTALEHQEYITFLEDLKSFVKNQ.

A mitochondrion-targeting transit peptide spans 1 to 70; it reads MLPLLRCVPR…PVPCACGCGA (70 aa). Residues 73–90 form a C1q binding region; that stretch reads TEGDKAFVEFLTDEIKEE. N6-acetyllysine is present on residues Lys88 and Lys91. The interval 133–162 is disordered; it reads NNSIPPTFDGEEEPSQGQKAEEQEPERTST. The tract at residues 165–209 is interaction with MAVS; that stretch reads FVVEVTKTDGKKTLVLDCHYPEDEIGHEDEAESDIFSIKEVSFQA. Position 184 is a phosphotyrosine (Tyr184). Residues Ser197 and Ser201 each carry the phosphoserine modification. Thr210 is modified (phosphothreonine).

It belongs to the MAM33 family. As to quaternary structure, homotrimer; three monomers form a donut-shaped structure with an unusually asymmetric charge distribution on the surface. Interacts with CDK13, HRK, VTN, NFYB, ADRA1B, FOXC1, DDX21, DDX50, NCL, SRSF1 and SRSF9. Interacts with CD93; the association may represent a cell surface C1q receptor. Interacts with KRT1; the association represents a cell surface kininogen receptor. Interacts with CD209; the interaction is indicative for a C1q:C1QBP:CD209 signaling complex. Interacts with FBL and RRP1; the respective interactions with C1QBP are competitive. Probably associates with the mitoribosome. Interacts with MAVS; the interaction occurs upon viral transfection. Interacts with PPIF. Interacts with U2AF1L4. Interacts with PLEKHN1. Interacts with VGF-derived peptide TLQP-21. Interacts with MRE11 and RAD50; forming the MRC (MRE11-RAD50-C1QBP) complex that inhibits the activity of MRE11. In terms of tissue distribution, ubiquitous.

It is found in the mitochondrion matrix. The protein localises to the nucleus. Its subcellular location is the cell membrane. The protein resides in the secreted. It localises to the cytoplasm. It is found in the nucleolus. Functionally, is believed to be a multifunctional and multicompartmental protein involved in inflammation and infection processes, ribosome biogenesis, protein synthesis in mitochondria, regulation of apoptosis, transcriptional regulation and pre-mRNA splicing. At the cell surface is thought to act as an endothelial receptor for plasma proteins of the complement and kallikrein-kinin cascades. Putative receptor for C1q; specifically binds to the globular 'heads' of C1q thus inhibiting C1; may perform the receptor function through a complex with C1qR/CD93. In complex with cytokeratin-1/KRT1 is a high affinity receptor for kininogen-1/HMWK. Can also bind other plasma proteins, such as coagulation factor XII leading to its autoactivation. May function to bind initially fluid kininogen-1 to the cell membrane. The secreted form may enhance both extrinsic and intrinsic coagulation pathways. It is postulated that the cell surface form requires docking with transmembrane proteins for downstream signaling which might be specific for a cell-type or response. By acting as C1q receptor is involved in chemotaxis of immature dendritic cells and neutrophils and is proposed to signal through CD209/DC-SIGN on immature dendritic cells, through integrin alpha-4/beta-1 during trophoblast invasion of the decidua, and through integrin beta-1 during endothelial cell adhesion and spreading. Signaling involved in inhibition of innate immune response is implicating the PI3K-AKT/PKB pathway. Required for protein synthesis in mitochondria. In mitochondrial translation may be involved in formation of functional 55S mitoribosomes; the function seems to involve its RNA-binding activity. Acts as a RNA modification reader, which specifically recognizes and binds mitochondrial RNAs modified by C5-methylcytosine (m5C) in response to stress, and promotes recruitment of the mitochondrial degradosome complex, leading to their degradation. May be involved in the nucleolar ribosome maturation process; the function may involve the exchange of FBL for RRP1 in the association with pre-ribosome particles. Involved in regulation of RNA splicing by inhibiting the RNA-binding capacity of SRSF1 and its phosphorylation. Is required for the nuclear translocation of splicing factor U2AF1L4. Involved in regulation of CDKN2A- and HRK-mediated apoptosis. May be involved in regulation of FOXC1 transcriptional activity and NFY/CCAAT-binding factor complex-mediated transcription. May play a role in antibacterial defense. Acts as a regulator of DNA repair via homologous recombination by inhibiting the activity of MRE11: interacts with unphosphorylated MRE11 and RAD50 in absence of DNA damage, preventing formation and activity of the MRN complex. Following DNA damage, dissociates from phosphorylated MRE11, allowing formation of the MRN complex. The protein is Complement component 1 Q subcomponent-binding protein, mitochondrial (C1qbp) of Mus musculus (Mouse).